The sequence spans 395 residues: FAD-dependent monooxygenase cctM (395 aa).

The N-terminal stretch at 1–23 (MEPGTDVRRVLVIGAGAAGLLIA) is a signal peptide. FAD-binding residues include Glu-37, Gly-52, and Arg-112. N-linked (GlcNAc...) asparagine glycans are attached at residues Asn-138 and Asn-298. Asp-306 is an FAD binding site.

The protein belongs to the paxM FAD-dependent monooxygenase family. Requires FAD as cofactor.

Its pathway is mycotoxin biosynthesis. Functionally, FAD-dependent monooxygenase; part of the gene cluster that mediates the biosynthesis of the mycotoxin cyclochlorotine, a hepatotoxic and carcinogenic cyclic chlorinated pentapeptide. The function of cctM within the pathway, if any, remains undetermined. The NRPS cctN initially catalyzes the condensation of L-serine (Ser), Pro, L-2-aminobutyrate (2Abu), Ser, and beta-Phe in this order to produce isocyclotine. After the dichlorination of Pro2 catalyzed by cctP2 to produce isocyclochlorotine, the cctO-mediated transacylation of isocyclochlorotine can furnish cyclochlorotine. The subsequent hydroxylation of cyclochlorotine by cctR yields hydroxycyclochlorotine as the final product. CctP1 probably acts as a phenylalanine aminomutase and provides the uncommon building block beta-Phe. Furthermore, 2Abu can be synthesized from threonine by one of the threonine dehydratases and transaminases localized outside of the cluster. The functions of the remaining proteins encoded by the cluster, cctM and cctT, have not been identified yet. This is FAD-dependent monooxygenase cctM from Talaromyces islandicus (Penicillium islandicum).